A 275-amino-acid chain; its full sequence is Tryptophan synthase alpha chain (275 aa).

Residues E51 and E62 each act as proton acceptor in the active site.

It belongs to the TrpA family. In terms of assembly, tetramer of two alpha and two beta chains.

It carries out the reaction (1S,2R)-1-C-(indol-3-yl)glycerol 3-phosphate + L-serine = D-glyceraldehyde 3-phosphate + L-tryptophan + H2O. The protein operates within amino-acid biosynthesis; L-tryptophan biosynthesis; L-tryptophan from chorismate: step 5/5. The alpha subunit is responsible for the aldol cleavage of indoleglycerol phosphate to indole and glyceraldehyde 3-phosphate. This Caulobacter sp. (strain K31) protein is Tryptophan synthase alpha chain.